Reading from the N-terminus, the 547-residue chain is Chaperonin GroEL (547 aa).

Residues 30–33, K51, 87–91, G415, 479–481, and D495 contribute to the ATP site; these read TLGP, DGTTT, and NAA.

Belongs to the chaperonin (HSP60) family. As to quaternary structure, forms a cylinder of 14 subunits composed of two heptameric rings stacked back-to-back. Interacts with the co-chaperonin GroES.

It is found in the cytoplasm. It catalyses the reaction ATP + H2O + a folded polypeptide = ADP + phosphate + an unfolded polypeptide.. Together with its co-chaperonin GroES, plays an essential role in assisting protein folding. The GroEL-GroES system forms a nano-cage that allows encapsulation of the non-native substrate proteins and provides a physical environment optimized to promote and accelerate protein folding. This Delftia acidovorans (strain DSM 14801 / SPH-1) protein is Chaperonin GroEL.